Here is a 150-residue protein sequence, read N- to C-terminus: Ribonuclease pancreatic delta-type (150 aa).

The signal sequence occupies residues 1–25 (MGLEKSLILFSLLVLVLGWVQPSLG). R35 contacts substrate. The active-site Proton acceptor is the H37. 4 cysteine pairs are disulfide-bonded: C51–C110, C65–C121, C83–C136, and C90–C98. Substrate-binding positions include 66-70 (KRVNT), K91, and R111. The Proton donor role is filled by H145.

It belongs to the pancreatic ribonuclease family. Monomer.

It is found in the secreted. It catalyses the reaction an [RNA] containing cytidine + H2O = an [RNA]-3'-cytidine-3'-phosphate + a 5'-hydroxy-ribonucleotide-3'-[RNA].. The enzyme catalyses an [RNA] containing uridine + H2O = an [RNA]-3'-uridine-3'-phosphate + a 5'-hydroxy-ribonucleotide-3'-[RNA].. Functionally, endonuclease that catalyzes the cleavage of RNA on the 3' side of pyrimidine nucleotides. Acts on single-stranded and double-stranded RNA. The polypeptide is Ribonuclease pancreatic delta-type (Rattus exulans (Polynesian rat)).